The following is a 236-amino-acid chain: Thiamine import ATP-binding protein ThiQ (236 aa).

In terms of domain architecture, ABC transporter spans 2-230 (LKLEKITYLY…SAAKASVLGI (229 aa)). Position 32–39 (32–39 (GPSGAGKS)) interacts with ATP.

Belongs to the ABC transporter superfamily. Thiamine importer (TC 3.A.1.19.1) family. In terms of assembly, the complex is composed of two ATP-binding proteins (ThiQ), two transmembrane proteins (ThiP) and a solute-binding protein (ThiB).

It localises to the cell inner membrane. The enzyme catalyses thiamine(out) + ATP + H2O = thiamine(in) + ADP + phosphate + H(+). Part of the ABC transporter complex ThiBPQ involved in thiamine import. Responsible for energy coupling to the transport system. The polypeptide is Thiamine import ATP-binding protein ThiQ (Yersinia pseudotuberculosis serotype I (strain IP32953)).